Consider the following 96-residue polypeptide: Co-chaperonin GroES (96 aa).

Belongs to the GroES chaperonin family. Heptamer of 7 subunits arranged in a ring. Interacts with the chaperonin GroEL.

Its subcellular location is the cytoplasm. Together with the chaperonin GroEL, plays an essential role in assisting protein folding. The GroEL-GroES system forms a nano-cage that allows encapsulation of the non-native substrate proteins and provides a physical environment optimized to promote and accelerate protein folding. GroES binds to the apical surface of the GroEL ring, thereby capping the opening of the GroEL channel. The chain is Co-chaperonin GroES from Geotalea daltonii (strain DSM 22248 / JCM 15807 / FRC-32) (Geobacter daltonii).